Consider the following 237-residue polypeptide: Phosphoribosylaminoimidazole-succinocarboxamide synthase (237 aa).

This sequence belongs to the SAICAR synthetase family.

The enzyme catalyses 5-amino-1-(5-phospho-D-ribosyl)imidazole-4-carboxylate + L-aspartate + ATP = (2S)-2-[5-amino-1-(5-phospho-beta-D-ribosyl)imidazole-4-carboxamido]succinate + ADP + phosphate + 2 H(+). Its pathway is purine metabolism; IMP biosynthesis via de novo pathway; 5-amino-1-(5-phospho-D-ribosyl)imidazole-4-carboxamide from 5-amino-1-(5-phospho-D-ribosyl)imidazole-4-carboxylate: step 1/2. The polypeptide is Phosphoribosylaminoimidazole-succinocarboxamide synthase (Shigella sonnei (strain Ss046)).